The primary structure comprises 259 residues: Phosphatidylserine decarboxylase proenzyme (259 aa).

Residues aspartate 86, histidine 142, and serine 226 each act as charge relay system; for autoendoproteolytic cleavage activity in the active site. Serine 226 serves as the catalytic Schiff-base intermediate with substrate; via pyruvic acid; for decarboxylase activity. Serine 226 carries the pyruvic acid (Ser); by autocatalysis modification.

It belongs to the phosphatidylserine decarboxylase family. PSD-B subfamily. Prokaryotic type I sub-subfamily. In terms of assembly, heterodimer of a large membrane-associated beta subunit and a small pyruvoyl-containing alpha subunit. It depends on pyruvate as a cofactor. In terms of processing, is synthesized initially as an inactive proenzyme. Formation of the active enzyme involves a self-maturation process in which the active site pyruvoyl group is generated from an internal serine residue via an autocatalytic post-translational modification. Two non-identical subunits are generated from the proenzyme in this reaction, and the pyruvate is formed at the N-terminus of the alpha chain, which is derived from the carboxyl end of the proenzyme. The autoendoproteolytic cleavage occurs by a canonical serine protease mechanism, in which the side chain hydroxyl group of the serine supplies its oxygen atom to form the C-terminus of the beta chain, while the remainder of the serine residue undergoes an oxidative deamination to produce ammonia and the pyruvoyl prosthetic group on the alpha chain. During this reaction, the Ser that is part of the protease active site of the proenzyme becomes the pyruvoyl prosthetic group, which constitutes an essential element of the active site of the mature decarboxylase.

The protein resides in the cell membrane. The catalysed reaction is a 1,2-diacyl-sn-glycero-3-phospho-L-serine + H(+) = a 1,2-diacyl-sn-glycero-3-phosphoethanolamine + CO2. It participates in phospholipid metabolism; phosphatidylethanolamine biosynthesis; phosphatidylethanolamine from CDP-diacylglycerol: step 2/2. In terms of biological role, catalyzes the formation of phosphatidylethanolamine (PtdEtn) from phosphatidylserine (PtdSer). The sequence is that of Phosphatidylserine decarboxylase proenzyme from Halalkalibacterium halodurans (strain ATCC BAA-125 / DSM 18197 / FERM 7344 / JCM 9153 / C-125) (Bacillus halodurans).